A 616-amino-acid chain; its full sequence is Chaperone protein HscA (616 aa).

It belongs to the heat shock protein 70 family.

Chaperone involved in the maturation of iron-sulfur cluster-containing proteins. Has a low intrinsic ATPase activity which is markedly stimulated by HscB. Involved in the maturation of IscU. The protein is Chaperone protein HscA of Edwardsiella ictaluri (strain 93-146).